The chain runs to 451 residues: Phosphoglucosamine mutase (451 aa).

The Phosphoserine intermediate role is filled by S107. Positions 107, 246, 248, and 250 each coordinate Mg(2+). S107 carries the phosphoserine modification.

The protein belongs to the phosphohexose mutase family. It depends on Mg(2+) as a cofactor. In terms of processing, activated by phosphorylation.

It carries out the reaction alpha-D-glucosamine 1-phosphate = D-glucosamine 6-phosphate. Catalyzes the conversion of glucosamine-6-phosphate to glucosamine-1-phosphate. In Burkholderia cenocepacia (strain ATCC BAA-245 / DSM 16553 / LMG 16656 / NCTC 13227 / J2315 / CF5610) (Burkholderia cepacia (strain J2315)), this protein is Phosphoglucosamine mutase.